The primary structure comprises 349 residues: Anthranilate phosphoribosyltransferase (349 aa).

Residues G94, 97-98 (GD), T102, 104-107 (NIST), 122-130 (KHGNRSVSS), and S134 each bind 5-phospho-alpha-D-ribose 1-diphosphate. G94 contacts anthranilate. S106 lines the Mg(2+) pocket. N125 contributes to the anthranilate binding site. R180 contacts anthranilate. Residues D239 and E240 each coordinate Mg(2+).

This sequence belongs to the anthranilate phosphoribosyltransferase family. In terms of assembly, homodimer. Mg(2+) serves as cofactor.

It carries out the reaction N-(5-phospho-beta-D-ribosyl)anthranilate + diphosphate = 5-phospho-alpha-D-ribose 1-diphosphate + anthranilate. Its pathway is amino-acid biosynthesis; L-tryptophan biosynthesis; L-tryptophan from chorismate: step 2/5. In terms of biological role, catalyzes the transfer of the phosphoribosyl group of 5-phosphorylribose-1-pyrophosphate (PRPP) to anthranilate to yield N-(5'-phosphoribosyl)-anthranilate (PRA). The protein is Anthranilate phosphoribosyltransferase of Trichlorobacter lovleyi (strain ATCC BAA-1151 / DSM 17278 / SZ) (Geobacter lovleyi).